We begin with the raw amino-acid sequence, 333 residues long: Taste receptor type 2 member 38 (333 aa).

The Extracellular portion of the chain corresponds to M1 to T17. Residues F18–L38 form a helical membrane-spanning segment. At V39–C55 the chain is on the cytoplasmic side. A helical transmembrane segment spans residues V56–I76. The Extracellular portion of the chain corresponds to Q77–A94. The chain crosses the membrane as a helical span at residues I95 to L115. Residues L116–Q142 are Cytoplasmic-facing. Residues M143–F163 form a helical membrane-spanning segment. Topologically, residues S164–N190 are extracellular. N-linked (GlcNAc...) asparagine glycosylation occurs at N178. A helical transmembrane segment spans residues L191–V211. At S212–S251 the chain is on the cytoplasmic side. A helical membrane pass occupies residues F252–L272. Topologically, residues W273 to K276 are extracellular. Residues I277 to L297 form a helical membrane-spanning segment. Residues I298–C333 are Cytoplasmic-facing.

It belongs to the G-protein coupled receptor T2R family.

The protein localises to the membrane. Receptor that may play a role in the perception of bitterness and is gustducin-linked. May play a role in sensing the chemical composition of the gastrointestinal content. The activity of this receptor may stimulate alpha gustducin, mediate PLC-beta-2 activation and lead to the gating of TRPM5. The chain is Taste receptor type 2 member 38 (TAS2R38) from Pan paniscus (Pygmy chimpanzee).